The sequence spans 269 residues: MKGVYHLAKLEWYFEYEIQVNRPGLLGDISSLLGMLSINIVTINGVDLSRRGMLLRCRHIDQIKRLESILKTMETIKVTKLREPRLRDRLAVRHGRYIQRDADDKKTFRFERDELGLLVDFMAELFKKEGHKLIGIRGMPRVGKTESIVASSVCASKRWLFVSSTLLKQTIRSQLIADEYSTENVFIVDGIVSTRRGSERHLQLVREIMRLPATKVVEHPDIFVQNTEYTLDDFDYIIELRNDPDEVITYEHAEEPQMFDQSGFSSFDF.

One can recognise an ACT domain in the interval 14–89; that stretch reads FEYEIQVNRP…KLREPRLRDR (76 aa).

This is an uncharacterized protein from Bacillus subtilis (strain 168).